Reading from the N-terminus, the 331-residue chain is Bifunctional nuclease 1 (331 aa).

In terms of domain architecture, BFN spans 126-261 (CVQNNPRVLR…RIAYNNGLKV (136 aa)). The UVR domain maps to 291-326 (EAQEFDLVRNMLVAAVEERYKDAAQYRDQLFMFRAK).

This sequence belongs to the bifunctional nuclease family.

Its subcellular location is the nucleus. Functionally, bifunctional nuclease with both RNase and DNase activities. Involved in basal defense response. Participates in abscisic acid-derived callose deposition following infection by a necrotrophic pathogen. The protein is Bifunctional nuclease 1 (BBD1) of Oryza sativa subsp. japonica (Rice).